The chain runs to 184 residues: Large ribosomal subunit protein uL5 (184 aa).

This sequence belongs to the universal ribosomal protein uL5 family. In terms of assembly, part of the 50S ribosomal subunit; part of the 5S rRNA/L5/L18/L25 subcomplex. Contacts the 5S rRNA and the P site tRNA. Forms a bridge to the 30S subunit in the 70S ribosome.

In terms of biological role, this is one of the proteins that bind and probably mediate the attachment of the 5S RNA into the large ribosomal subunit, where it forms part of the central protuberance. In the 70S ribosome it contacts protein S13 of the 30S subunit (bridge B1b), connecting the 2 subunits; this bridge is implicated in subunit movement. Contacts the P site tRNA; the 5S rRNA and some of its associated proteins might help stabilize positioning of ribosome-bound tRNAs. This chain is Large ribosomal subunit protein uL5, found in Fervidobacterium nodosum (strain ATCC 35602 / DSM 5306 / Rt17-B1).